The primary structure comprises 321 residues: MNRPERLQPGVKLRDADKVSRIPVKIVPSERETMLRKPDWLRVKLPASNQRILEIKQALRSNGLHSVCEEASCPNLAECFNHGTATFMILGAICTRRCPFCDVAHGRPLKPDADEPVKLAQTIRDMKLKYVVITSVDRDDLRDGGAQHFADCIREIRKLNPEIKIEILVPDFRGRIDAALDILSTEPPDVFNHNLETAPMHYRKARPGANYQWSLDLLKRFKERHPNVPTKSGLMMGLGETNEEIAQVLRDLREHKVEMLTLGQYLQPSKFHLPVERYVSPAEFDELKVLADELGFTHAACGPLVRSSYHADLQAQGKEVK.

The [4Fe-4S] cluster site is built by C68, C73, C79, C94, C98, C101, and S308. The 218-residue stretch at 80-297 (FNHGTATFMI…KVLADELGFT (218 aa)) folds into the Radical SAM core domain.

Belongs to the radical SAM superfamily. Lipoyl synthase family. The cofactor is [4Fe-4S] cluster.

It is found in the cytoplasm. It catalyses the reaction [[Fe-S] cluster scaffold protein carrying a second [4Fe-4S](2+) cluster] + N(6)-octanoyl-L-lysyl-[protein] + 2 oxidized [2Fe-2S]-[ferredoxin] + 2 S-adenosyl-L-methionine + 4 H(+) = [[Fe-S] cluster scaffold protein] + N(6)-[(R)-dihydrolipoyl]-L-lysyl-[protein] + 4 Fe(3+) + 2 hydrogen sulfide + 2 5'-deoxyadenosine + 2 L-methionine + 2 reduced [2Fe-2S]-[ferredoxin]. It participates in protein modification; protein lipoylation via endogenous pathway; protein N(6)-(lipoyl)lysine from octanoyl-[acyl-carrier-protein]: step 2/2. In terms of biological role, catalyzes the radical-mediated insertion of two sulfur atoms into the C-6 and C-8 positions of the octanoyl moiety bound to the lipoyl domains of lipoate-dependent enzymes, thereby converting the octanoylated domains into lipoylated derivatives. The polypeptide is Lipoyl synthase (Shewanella sp. (strain MR-7)).